A 56-amino-acid chain; its full sequence is Attractin (56 aa).

3 disulfide bridges follow: Cys4–Cys41, Cys13–Cys33, and Cys20–Cys26.

Produced by the albumen gland of the egg cordons.

The protein localises to the secreted. In terms of biological role, water-borne pheromone that attract the marine mollusk Aplysia into breeding aggregations and coordinate male and female reproductive behavior within the aggregation. The sequence is that of Attractin (ATT) from Aplysia vaccaria (California black sea hare).